The following is a 91-amino-acid chain: Non-specific lipid-transfer protein 1 (91 aa).

4 cysteine pairs are disulfide-bonded: Cys-3–Cys-50, Cys-13–Cys-27, Cys-28–Cys-73, and Cys-48–Cys-87.

It belongs to the plant LTP family.

Its function is as follows. Plant non-specific lipid-transfer proteins transfer phospholipids as well as galactolipids across membranes. May play a role in wax or cutin deposition in the cell walls of expanding epidermal cells and certain secretory tissues. The sequence is that of Non-specific lipid-transfer protein 1 from Prunus armeniaca (Apricot).